Here is a 105-residue protein sequence, read N- to C-terminus: Integration host factor subunit beta (105 aa).

This sequence belongs to the bacterial histone-like protein family. As to quaternary structure, heterodimer of an alpha and a beta chain.

In terms of biological role, this protein is one of the two subunits of integration host factor, a specific DNA-binding protein that functions in genetic recombination as well as in transcriptional and translational control. The polypeptide is Integration host factor subunit beta (Nitrosomonas eutropha (strain DSM 101675 / C91 / Nm57)).